The primary structure comprises 280 residues: Ribosomal protein L11 methyltransferase (280 aa).

Positions 130, 151, 172, and 213 each coordinate S-adenosyl-L-methionine.

The protein belongs to the methyltransferase superfamily. PrmA family.

Its subcellular location is the cytoplasm. The catalysed reaction is L-lysyl-[protein] + 3 S-adenosyl-L-methionine = N(6),N(6),N(6)-trimethyl-L-lysyl-[protein] + 3 S-adenosyl-L-homocysteine + 3 H(+). Functionally, methylates ribosomal protein L11. The polypeptide is Ribosomal protein L11 methyltransferase (Nitratiruptor sp. (strain SB155-2)).